The primary structure comprises 134 residues: Profilin-2 (134 aa).

A disulfide bond links C13 and C118. Positions 84-100 (AVIRGKKGSGGITIKKT) match the Involved in PIP2 interaction motif. T114 is subject to Phosphothreonine.

This sequence belongs to the profilin family. Occurs in many kinds of cells as a complex with monomeric actin in a 1:1 ratio. In terms of processing, phosphorylated by MAP kinases.

Its subcellular location is the cytoplasm. It localises to the cytoskeleton. In terms of biological role, binds to actin and affects the structure of the cytoskeleton. At high concentrations, profilin prevents the polymerization of actin, whereas it enhances it at low concentrations. This chain is Profilin-2, found in Olea europaea (Common olive).